A 334-amino-acid chain; its full sequence is Phenazine-1-carboxylate N-methyltransferase (334 aa).

Residues Asp-198 and Arg-241 each contribute to the S-adenosyl-L-methionine site.

This sequence belongs to the class I-like SAM-binding methyltransferase superfamily. Cation-independent O-methyltransferase family. In terms of assembly, homodimer in solution. Probably interacts transiently with PhzS.

The catalysed reaction is phenazine-1-carboxylate + S-adenosyl-L-methionine = 5-methyl-phenazine-1-carboxylate + S-adenosyl-L-homocysteine. Its pathway is secondary metabolite biosynthesis; pyocyanine biosynthesis. With respect to regulation, in vitro, requires PhzS for activity. Involved in the biosynthesis of pyocyanine, a blue-pigmented phenazine derivative, which plays a role in virulence. Converts phenazine-1-carboxylate (PCA) to 5-methylphenazine-1-carboxylate (5-methyl-PCA). The sequence is that of Phenazine-1-carboxylate N-methyltransferase from Pseudomonas aeruginosa (strain ATCC 15692 / DSM 22644 / CIP 104116 / JCM 14847 / LMG 12228 / 1C / PRS 101 / PAO1).